An 88-amino-acid polypeptide reads, in one-letter code: Phosphocarrier protein HPr (88 aa).

One can recognise an HPr domain in the interval 1-88 (MEQNSYVIID…DVLSKEGLTK (88 aa)). The active-site Pros-phosphohistidine intermediate is the His-15. Position 46 is a phosphoserine; by HPrK/P (Ser-46).

Its subcellular location is the cytoplasm. Its activity is regulated as follows. Phosphorylation on Ser-46 inhibits the phosphoryl transfer from enzyme I to HPr. Functionally, general (non sugar-specific) component of the phosphoenolpyruvate-dependent sugar phosphotransferase system (sugar PTS). This major carbohydrate active-transport system catalyzes the phosphorylation of incoming sugar substrates concomitantly with their translocation across the cell membrane. The phosphoryl group from phosphoenolpyruvate (PEP) is transferred to the phosphoryl carrier protein HPr by enzyme I. Phospho-HPr then transfers it to the PTS EIIA domain. In terms of biological role, P-Ser-HPr interacts with the catabolite control protein A (CcpA), forming a complex that binds to DNA at the catabolite response elements cre, operator sites preceding a large number of catabolite-regulated genes. Thus, P-Ser-HPr is a corepressor in carbon catabolite repression (CCR), a mechanism that allows bacteria to coordinate and optimize the utilization of available carbon sources. P-Ser-HPr also plays a role in inducer exclusion, in which it probably interacts with several non-PTS permeases and inhibits their transport activity. The chain is Phosphocarrier protein HPr (ptsH) from Staphylococcus aureus (strain MSSA476).